The chain runs to 277 residues: NAD kinase (277 aa).

The active-site Proton acceptor is the aspartate 67. NAD(+) contacts are provided by residues aspartate 67 to glycine 68, arginine 72, asparagine 137 to glutamate 138, lysine 148, arginine 165, aspartate 167, threonine 178 to serine 183, leucine 202, and glutamine 236.

This sequence belongs to the NAD kinase family. The cofactor is a divalent metal cation.

Its subcellular location is the cytoplasm. It carries out the reaction NAD(+) + ATP = ADP + NADP(+) + H(+). Functionally, involved in the regulation of the intracellular balance of NAD and NADP, and is a key enzyme in the biosynthesis of NADP. Catalyzes specifically the phosphorylation on 2'-hydroxyl of the adenosine moiety of NAD to yield NADP. This is NAD kinase from Pyrococcus abyssi (strain GE5 / Orsay).